The primary structure comprises 138 residues: Phosphoribosyl-AMP cyclohydrolase (138 aa).

D92 is a Mg(2+) binding site. C93 provides a ligand contact to Zn(2+). 2 residues coordinate Mg(2+): D94 and D96. Zn(2+) contacts are provided by C109 and C116.

Belongs to the PRA-CH family. Homodimer. It depends on Mg(2+) as a cofactor. The cofactor is Zn(2+).

It is found in the cytoplasm. The enzyme catalyses 1-(5-phospho-beta-D-ribosyl)-5'-AMP + H2O = 1-(5-phospho-beta-D-ribosyl)-5-[(5-phospho-beta-D-ribosylamino)methylideneamino]imidazole-4-carboxamide. The protein operates within amino-acid biosynthesis; L-histidine biosynthesis; L-histidine from 5-phospho-alpha-D-ribose 1-diphosphate: step 3/9. Its function is as follows. Catalyzes the hydrolysis of the adenine ring of phosphoribosyl-AMP. The sequence is that of Phosphoribosyl-AMP cyclohydrolase from Clavibacter sepedonicus (Clavibacter michiganensis subsp. sepedonicus).